The chain runs to 85 residues: Putative membrane protein insertion efficiency factor (85 aa).

The protein belongs to the UPF0161 family.

Its subcellular location is the cell membrane. In terms of biological role, could be involved in insertion of integral membrane proteins into the membrane. The chain is Putative membrane protein insertion efficiency factor from Buchnera aphidicola subsp. Baizongia pistaciae (strain Bp).